The primary structure comprises 310 residues: MRLISKVLVKTNCLEVGMRRAPQWYSHYSTTAGNARVNKKGSKVVPVLTGLALASIFAKKWYDDSQIKKADATSVAVDASISAFPKKMGPPQWPFSTQYELIGKGVRCVSSITFKAYGLGIYVAAEDKHLVSEVLDSKFLSQAFIDTAAPPSPENSHQDNLRAALNDPAKAPILINNLLDSGIRLMSKNTPIKAGSFKLLMDGTKKSVLKNPDSQSQDKDRLEAGFQELHDCFRSVKGLVARDDDFFIELNKDCSMNLSYYARKKDEFVILGTVKEPLIGKLLFAHYLAAVDPPSPEARKEVIDALVSLS.

A mitochondrion-targeting transit peptide spans 1–20; that stretch reads MRLISKVLVKTNCLEVGMRR.

The protein belongs to the AIM18/AIM46 family.

The protein localises to the mitochondrion. The sequence is that of Altered inheritance of mitochondria protein 46, mitochondrial (AIM46) from Saccharomyces cerevisiae (strain RM11-1a) (Baker's yeast).